We begin with the raw amino-acid sequence, 209 residues long: tRNA (guanine-N(7)-)-methyltransferase (209 aa).

S-adenosyl-L-methionine-binding residues include Asp-35, Glu-60, Asn-87, and Asp-113. Asp-113 is an active-site residue. Residues Lys-117 and Asp-149 each contribute to the substrate site.

It belongs to the class I-like SAM-binding methyltransferase superfamily. TrmB family.

The catalysed reaction is guanosine(46) in tRNA + S-adenosyl-L-methionine = N(7)-methylguanosine(46) in tRNA + S-adenosyl-L-homocysteine. It functions in the pathway tRNA modification; N(7)-methylguanine-tRNA biosynthesis. Its function is as follows. Catalyzes the formation of N(7)-methylguanine at position 46 (m7G46) in tRNA. The protein is tRNA (guanine-N(7)-)-methyltransferase of Prochlorococcus marinus (strain MIT 9215).